Here is a 231-residue protein sequence, read N- to C-terminus: Eukaryotic translation initiation factor 4E-1 (231 aa).

2 EIF4G-binding regions span residues 56-59 (HPLE) and 66-102 (FDNPTTKSRQTAWGSSLRNVYTFSTVEDFWGAYNNIH). MRNA-binding positions include 74–79 (RQTAWG), K106, and 124–125 (WE). A disulfide bond links C129 and C167. The tract at residues 150–159 (YTLLAMIGHQ) is EIF4G-binding. Residues 174–179 (RAKGEK) and 219–223 (KRLDR) contribute to the mRNA site.

Belongs to the eukaryotic initiation factor 4E family. As to quaternary structure, EIF4F is a multi-subunit complex, the composition of which varies with external and internal environmental conditions. It is composed of at least EIF4A, EIF4E and EIF4G. EIF4E is also known to interact with other partners. In higher plants two isoforms of EIF4F have been identified, named isoform EIF4F and isoform EIF(iso)4F. Isoform EIF4F has subunits p220 and p26, whereas isoform EIF(iso)4F has subunits p82 and p28. In terms of assembly, (Microbial infection) Interacts with potyvirus viral genome-linked protein (VPg); mostly with tobacco etch virus (TEV-HAT) VPg and, to a lower extent, with potato virus Y (PVY-LYE84 and PVY-LYE90) and pepper mottle virus (PepMoV) VPg. Post-translationally, according to the redox status, the Cys-129-Cys-167 disulfide bridge may have a role in regulating protein function by affecting its ability to bind capped mRNA.

The protein resides in the nucleus. The protein localises to the cytoplasm. Functionally, component of the protein complex eIF4F, which is involved in the recognition of the mRNA cap, ATP-dependent unwinding of 5'-terminal secondary structure and recruitment of mRNA to the ribosome. Recognizes and binds the 7-methylguanosine-containing mRNA cap during an early step in the initiation of protein synthesis and facilitates ribosome binding by inducing the unwinding of the mRNAs secondary structures. Key component of recessive resistance to potyviruses. (Microbial infection) Susceptibility host factor required for viral infection (e.g. potato virus Y (PVY), pepper mottle virus (PepMoV) and tobacco etch virus (TEV)) by recruiting viral RNAs to the host ribosomal complex via an interaction with viral genome-linked protein (VPg). The sequence is that of Eukaryotic translation initiation factor 4E-1 from Solanum lycopersicum (Tomato).